The following is an 856-amino-acid chain: Rod cGMP-specific 3',5'-cyclic phosphodiesterase subunit beta (856 aa).

An N-acetylserine modification is found at Ser2. GAF domains are found at residues 71–220 and 252–429; these read NMER…TLNL and DIER…GWSV. A PDEase domain is found at 481 to 814; that stretch reads EEDELGILLK…KEWKALADEY (334 aa). The Proton donor role is filled by His557. 4 residues coordinate a divalent metal cation: His561, His597, Asp598, and Asp718. A compositionally biased stretch (basic and acidic residues) spans 823–833; it reads EEKQQQEDRTT. A disordered region spans residues 823 to 842; it reads EEKQQQEDRTTAKKAGTEIC. Residue Cys853 is the site of S-geranylgeranyl cysteine attachment. Positions 854–856 are cleaved as a propeptide — removed in mature form; it reads CIL.

This sequence belongs to the cyclic nucleotide phosphodiesterase family. As to quaternary structure, oligomer composed of two catalytic chains (alpha and beta), an inhibitory chain (gamma) and the delta chain. The cofactor is a divalent metal cation.

It localises to the membrane. The protein localises to the cell projection. The protein resides in the cilium. It is found in the photoreceptor outer segment. The catalysed reaction is 3',5'-cyclic GMP + H2O = GMP + H(+). In terms of biological role, rod-specific cGMP phosphodiesterase that catalyzes the hydrolysis of 3',5'-cyclic GMP. Necessary for the formation of a functional phosphodiesterase holoenzyme. Involved in retinal circadian rhythm photoentrainment via modulation of UVA and orange light-induced phase-shift of the retina clock. May participate in processes of transmission and amplification of the visual signal. The sequence is that of Rod cGMP-specific 3',5'-cyclic phosphodiesterase subunit beta from Canis lupus familiaris (Dog).